A 160-amino-acid polypeptide reads, in one-letter code: Vegetative-specific protein V4 (160 aa).

Tandem repeats lie at residues 151-153 (NQP), 154-156 (NQP), and 157-159 (NQG). The 3 X 3 AA tandem repeats of N-Q-[PG] stretch occupies residues 151 to 159 (NQPNQPNQG).

Unknown. Its expression during growth is not required for growth but for the proper initiation of development, therefore playing a role in the transition from growth to development. The polypeptide is Vegetative-specific protein V4 (lmcB) (Dictyostelium discoideum (Social amoeba)).